A 681-amino-acid chain; its full sequence is Nucleolar GTP-binding protein 1 (681 aa).

The 172-residue stretch at 170 to 341 (RTLILCGFPN…LRDRACDELL (172 aa)) folds into the OBG-type G domain. Residues 176–183 (GFPNVGKS), 222–226 (DTPGI), and 290–293 (NKVD) contribute to the GTP site.

The protein belongs to the TRAFAC class OBG-HflX-like GTPase superfamily. OBG GTPase family. NOG subfamily. Ubiquitously expressed.

The protein localises to the nucleus. The protein resides in the nucleolus. Functionally, involved in the biogenesis of the 60S ribosomal subunit. Has a role in regulating longevity, growth and brood size. May regulate fat storage via the insulin/IGF pathway. This Caenorhabditis elegans protein is Nucleolar GTP-binding protein 1.